Reading from the N-terminus, the 592-residue chain is Inactive heparanase-2 (592 aa).

Positions 1–38 (MRVLCAFPEAMASSSSRPPSCLALVALFLALLLHLSLS) are cleaved as a signal peptide. Residues Asn254 and Asn392 are each glycosylated (N-linked (GlcNAc...) asparagine).

The protein belongs to the glycosyl hydrolase 79 family. As to quaternary structure, interacts with HPSE. Interacts with SDC1 (via glycan chains).

Its subcellular location is the secreted. It localises to the extracellular space. The protein localises to the extracellular matrix. In terms of biological role, binds heparin and heparan sulfate with high affinity, but lacks heparanase activity. Inhibits HPSE, possibly by competing for its substrates (in vitro). The chain is Inactive heparanase-2 (Hpse2) from Mus musculus (Mouse).